Reading from the N-terminus, the 246-residue chain is AA9 family lytic polysaccharide monooxygenase D (246 aa).

Positions 1 to 19 (MHLLSLLFPVIALIPTVLS) are cleaved as a signal peptide. H20 provides a ligand contact to Cu(2+). C78 and C196 are oxidised to a cystine. N-linked (GlcNAc...) asparagine glycosylation is found at N86, N141, and N156. Residues H182 and Q191 each coordinate O2. Y193 contacts Cu(2+). N235 carries an N-linked (GlcNAc...) asparagine glycan.

This sequence belongs to the polysaccharide monooxygenase AA9 family. It depends on Cu(2+) as a cofactor.

The protein localises to the secreted. The enzyme catalyses [(1-&gt;4)-beta-D-glucosyl]n+m + reduced acceptor + O2 = 4-dehydro-beta-D-glucosyl-[(1-&gt;4)-beta-D-glucosyl]n-1 + [(1-&gt;4)-beta-D-glucosyl]m + acceptor + H2O.. Functionally, lytic polysaccharide monooxygenase (LPMO) that depolymerizes crystalline and amorphous polysaccharides via the oxidation of scissile alpha- or beta-(1-4)-glycosidic bonds, yielding C1 and C4 oxidation products. Catalysis by LPMOs requires the reduction of the active-site copper from Cu(II) to Cu(I) by a reducing agent and H(2)O(2) or O(2) as a cosubstrate. The polypeptide is AA9 family lytic polysaccharide monooxygenase D (Botryotinia fuckeliana (strain B05.10) (Noble rot fungus)).